A 477-amino-acid polypeptide reads, in one-letter code: Bifunctional protein HldE (477 aa).

The interval Met1 to Thr318 is ribokinase. Asn195–Glu198 contributes to the ATP binding site. Residue Asp264 is part of the active site. Positions Met344 to Lys477 are cytidylyltransferase.

It in the N-terminal section; belongs to the carbohydrate kinase PfkB family. The protein in the C-terminal section; belongs to the cytidylyltransferase family. In terms of assembly, homodimer.

The enzyme catalyses D-glycero-beta-D-manno-heptose 7-phosphate + ATP = D-glycero-beta-D-manno-heptose 1,7-bisphosphate + ADP + H(+). The catalysed reaction is D-glycero-beta-D-manno-heptose 1-phosphate + ATP + H(+) = ADP-D-glycero-beta-D-manno-heptose + diphosphate. It participates in nucleotide-sugar biosynthesis; ADP-L-glycero-beta-D-manno-heptose biosynthesis; ADP-L-glycero-beta-D-manno-heptose from D-glycero-beta-D-manno-heptose 7-phosphate: step 1/4. Its pathway is nucleotide-sugar biosynthesis; ADP-L-glycero-beta-D-manno-heptose biosynthesis; ADP-L-glycero-beta-D-manno-heptose from D-glycero-beta-D-manno-heptose 7-phosphate: step 3/4. In terms of biological role, catalyzes the phosphorylation of D-glycero-D-manno-heptose 7-phosphate at the C-1 position to selectively form D-glycero-beta-D-manno-heptose-1,7-bisphosphate. Its function is as follows. Catalyzes the ADP transfer from ATP to D-glycero-beta-D-manno-heptose 1-phosphate, yielding ADP-D-glycero-beta-D-manno-heptose. The protein is Bifunctional protein HldE of Salmonella arizonae (strain ATCC BAA-731 / CDC346-86 / RSK2980).